We begin with the raw amino-acid sequence, 229 residues long: uncharacterized protein (229 aa).

Residues 2–69 (QRLAKIISNA…KPRLWIYYKP (68 aa)) enclose the S4 RNA-binding domain. The Nucleophile role is filled by aspartate 102.

It belongs to the pseudouridine synthase RsuA family.

It carries out the reaction a uridine in RNA = a pseudouridine in RNA. This is an uncharacterized protein from Rickettsia felis (strain ATCC VR-1525 / URRWXCal2) (Rickettsia azadi).